The primary structure comprises 327 residues: MTQTPVKIAVTGAAGQICYSLLFRIASGSLLGDTPIELRLLEITPALKALEGVVMELDDCAFGNLVNIEIGDDPKKVFDGVNAAFLVGAMPRKAGMERSDLLTKNGAIFTAQGKALNDVAADDVRVLVTGNPANTNALIAATNAVDIPNNHFAALTRLDHNRAKTQLARKTGKTVNDVRHMTIWGNHSSTQYPDVFHAEVAGQKATNLVNEAWIENEFIPTVAKRGAAIIDARGASSAASAANATVECMRDWMGSTPEGDWVSMAIPSDGSYGVPEGLISSFPVTITNGKVEIVQGLDIDDFSRAKIDASAKELADERDAVKELGLI.

12 to 18 (GAAGQIC) serves as a coordination point for NAD(+). 2 residues coordinate substrate: arginine 92 and arginine 98. Residues asparagine 105, glutamine 112, and 129–131 (TGN) contribute to the NAD(+) site. 2 residues coordinate substrate: asparagine 131 and arginine 162. The Proton acceptor role is filled by histidine 187.

It belongs to the LDH/MDH superfamily. MDH type 2 family.

It carries out the reaction (S)-malate + NAD(+) = oxaloacetate + NADH + H(+). In terms of biological role, catalyzes the reversible oxidation of malate to oxaloacetate. The protein is Malate dehydrogenase of Cutibacterium acnes (strain DSM 16379 / KPA171202) (Propionibacterium acnes).